Reading from the N-terminus, the 234-residue chain is Large ribosomal subunit protein uL1 (234 aa).

It belongs to the universal ribosomal protein uL1 family. Part of the 50S ribosomal subunit.

In terms of biological role, binds directly to 23S rRNA. The L1 stalk is quite mobile in the ribosome, and is involved in E site tRNA release. Protein L1 is also a translational repressor protein, it controls the translation of the L11 operon by binding to its mRNA. The sequence is that of Large ribosomal subunit protein uL1 from Anaeromyxobacter dehalogenans (strain 2CP-1 / ATCC BAA-258).